A 464-amino-acid chain; its full sequence is RCC1-like G exchanging factor-like protein (464 aa).

A mitochondrion-targeting transit peptide spans 1-37 (MALVALVAGARLGRRLSGPGLGRGHWTAAGRSRSRRE). RCC1 repeat units lie at residues 58-124 (ADRV…LSSK), 128-191 (VTKV…VLTD), 193-247 (EGVF…FLTD), 248-300 (KGEV…AVSA), 302-353 (GGLF…VLNG), 354-411 (EGHV…ALTN), and 412-461 (KGEL…TLAK).

As to quaternary structure, forms a regulatory protein-RNA complex, consisting of RCC1L, NGRN, RPUSD3, RPUSD4, TRUB2, FASTKD2 and 16S mt-rRNA. Interacts with 16S mt-rRNA; this interaction is direct. Interacts with OPA1; this interaction is direct. In terms of assembly, asociates with the mitochondrial ribosome large subunit (mt-LSU). Asociates with the mitochondrial ribosome small subunit (mt-SSU). In terms of tissue distribution, ubiquitous.

Its subcellular location is the mitochondrion membrane. It localises to the mitochondrion inner membrane. Guanine nucleotide exchange factor (GEF) for mitochondrial dynamin-related GTPase OPA1. Activates OPA1, by exchanging bound GDP for free GTP, and drives OPA1 and MFN1-dependent mitochondrial fusion. Plays an essential role in mitochondrial ribosome biogenesis. As a component of a functional protein-RNA module, consisting of RCC1L, NGRN, RPUSD3, RPUSD4, TRUB2, FASTKD2 and 16S mitochondrial ribosomal RNA (16S mt-rRNA), controls 16S mt-rRNA abundance and is required for intra-mitochondrial translation of core subunits of the oxidative phosphorylation system. In terms of biological role, plays an essential role in mitochondrial ribosome biogenesis via its association with GTPases that play a role in the assembly of the large ribosome subunit. Functionally, plays an essential role in mitochondrial ribosome biogenesis via its association with GTPases that play a role in the assembly of the small ribosome subunit. This Homo sapiens (Human) protein is RCC1-like G exchanging factor-like protein.